A 261-amino-acid chain; its full sequence is Proteasome subunit alpha type-4 (261 aa).

2 positions are modified to phosphoserine: serine 13 and serine 75. Lysine 127 carries the post-translational modification N6-acetyllysine. Serine 173 carries the phosphoserine modification. Residue lysine 176 is modified to N6-acetyllysine. The tract at residues 240–261 (HEEEEAKAEREKKEKEQKEKDK) is disordered.

It belongs to the peptidase T1A family. The 26S proteasome consists of a 20S proteasome core and two 19S regulatory subunits. The 20S proteasome core is a barrel-shaped complex made of 28 subunits that are arranged in four stacked rings. The two outer rings are each formed by seven alpha subunits, and the two inner rings are formed by seven beta subunits. The proteolytic activity is exerted by three beta-subunits PSMB5, PSMB6 and PSMB7.

The protein localises to the cytoplasm. It is found in the nucleus. Its function is as follows. Component of the 20S core proteasome complex involved in the proteolytic degradation of most intracellular proteins. This complex plays numerous essential roles within the cell by associating with different regulatory particles. Associated with two 19S regulatory particles, forms the 26S proteasome and thus participates in the ATP-dependent degradation of ubiquitinated proteins. The 26S proteasome plays a key role in the maintenance of protein homeostasis by removing misfolded or damaged proteins that could impair cellular functions, and by removing proteins whose functions are no longer required. Associated with the PA200 or PA28, the 20S proteasome mediates ubiquitin-independent protein degradation. This type of proteolysis is required in several pathways including spermatogenesis (20S-PA200 complex) or generation of a subset of MHC class I-presented antigenic peptides (20S-PA28 complex). This Bos taurus (Bovine) protein is Proteasome subunit alpha type-4 (PSMA4).